A 158-amino-acid polypeptide reads, in one-letter code: Crossover junction endodeoxyribonuclease RuvC (158 aa).

Residues Asp7, Glu66, and Asp139 contribute to the active site. Mg(2+) contacts are provided by Asp7, Glu66, and Asp139.

This sequence belongs to the RuvC family. Homodimer which binds Holliday junction (HJ) DNA. The HJ becomes 2-fold symmetrical on binding to RuvC with unstacked arms; it has a different conformation from HJ DNA in complex with RuvA. In the full resolvosome a probable DNA-RuvA(4)-RuvB(12)-RuvC(2) complex forms which resolves the HJ. It depends on Mg(2+) as a cofactor.

Its subcellular location is the cytoplasm. The enzyme catalyses Endonucleolytic cleavage at a junction such as a reciprocal single-stranded crossover between two homologous DNA duplexes (Holliday junction).. The RuvA-RuvB-RuvC complex processes Holliday junction (HJ) DNA during genetic recombination and DNA repair. Endonuclease that resolves HJ intermediates. Cleaves cruciform DNA by making single-stranded nicks across the HJ at symmetrical positions within the homologous arms, yielding a 5'-phosphate and a 3'-hydroxyl group; requires a central core of homology in the junction. The consensus cleavage sequence is 5'-(A/T)TT(C/G)-3'. Cleavage occurs on the 3'-side of the TT dinucleotide at the point of strand exchange. HJ branch migration catalyzed by RuvA-RuvB allows RuvC to scan DNA until it finds its consensus sequence, where it cleaves and resolves the cruciform DNA. This is Crossover junction endodeoxyribonuclease RuvC from Carboxydothermus hydrogenoformans (strain ATCC BAA-161 / DSM 6008 / Z-2901).